The primary structure comprises 285 residues: Protease HtpX homolog (285 aa).

2 consecutive transmembrane segments (helical) span residues 7 to 27 and 30 to 50; these read TAML…MIGG and GMTI…WFSD. A Zn(2+)-binding site is contributed by H131. Residue E132 is part of the active site. Residue H135 coordinates Zn(2+). A run of 2 helical transmembrane segments spans residues 146–166 and 177–197; these read ITAT…FFGG and IAGI…QMAI. Position 202 (E202) interacts with Zn(2+).

This sequence belongs to the peptidase M48B family. Zn(2+) serves as cofactor.

Its subcellular location is the cell inner membrane. This is Protease HtpX homolog from Burkholderia ambifaria (strain MC40-6).